A 198-amino-acid chain; its full sequence is HTH-type transcriptional regulator BetI (198 aa).

The HTH tetR-type domain maps to 8-68 (KIRRPQLVSA…ETMRDILRQL (61 aa)). Positions 31–50 (SVSLISQEAGVSSGIINHYF) form a DNA-binding region, H-T-H motif.

It functions in the pathway amine and polyamine biosynthesis; betaine biosynthesis via choline pathway [regulation]. In terms of biological role, repressor involved in the biosynthesis of the osmoprotectant glycine betaine. It represses transcription of the choline transporter BetT and the genes of BetAB involved in the synthesis of glycine betaine. This Vibrio vulnificus (strain YJ016) protein is HTH-type transcriptional regulator BetI.